Consider the following 90-residue polypeptide: Large ribosomal subunit protein bL27 (90 aa).

The protein belongs to the bacterial ribosomal protein bL27 family.

The sequence is that of Large ribosomal subunit protein bL27 from Paracoccus denitrificans (strain Pd 1222).